We begin with the raw amino-acid sequence, 399 residues long: MSRVVLAMSGGVDSSVAAHLLLRDGHEVIGVFMRHGEASAAACRIDSDEPQNTNPLNLPVLGDSAGGKRADHKQGCCSATDAADARRVAMSMGIPFYSLDLQEDFRKIVDYFVDDYLAARTPNPCVKCNHWIKFGRLFDYADGVDAEFVATGHYARMVHSNGRSELHRGLDGHKDQSYALFGIDPARLSRMMLPVGDFTKPEIREMATSLGLGVSDKKDSQEICFVTQGHHSDFVKSRRPEMVGATAGEIVTTGGKVVGEHKGFEAFTIGQRKRLGVAMGEPHFVIRIEPDTRRVVIGRAEELLRPGLVADQCNWFVTREELADAQSVGIQIRYNGQPHPGHVVMDGSDPTRMKVMFDDPQAAVAPGQAAVVYDGERVLGGGWITHAIDHIADGSPPPA.

ATP-binding positions include 7–14 (AMSGGVDS) and methionine 33. The Nucleophile role is filled by cysteine 128. Residues cysteine 128 and cysteine 224 are joined by a disulfide bond. Glycine 152 contacts ATP. The tract at residues 174–176 (KDQ) is interaction with tRNA. Cysteine 224 acts as the Cysteine persulfide intermediate in catalysis. Residues 333 to 334 (RY) are interaction with tRNA.

The protein belongs to the MnmA/TRMU family.

The protein localises to the cytoplasm. It carries out the reaction S-sulfanyl-L-cysteinyl-[protein] + uridine(34) in tRNA + AH2 + ATP = 2-thiouridine(34) in tRNA + L-cysteinyl-[protein] + A + AMP + diphosphate + H(+). Catalyzes the 2-thiolation of uridine at the wobble position (U34) of tRNA, leading to the formation of s(2)U34. This chain is tRNA-specific 2-thiouridylase MnmA, found in Rhodopirellula baltica (strain DSM 10527 / NCIMB 13988 / SH1).